Here is a 140-residue protein sequence, read N- to C-terminus: RxLR effector protein Avh23 (140 aa).

An N-terminal signal peptide occupies residues 1 to 21 (MRLTYFLTVIVVATLHAGGTA). Positions 54–72 (RMLRKVKEDTVSKKDHEER) match the RxLR-dEER motif. The stretch at 100–113 (QGAFQRQNAFVNRD) is one ADA2-binding IR1 repeat. The ADA2-binding IR2 repeat unit spans residues 114–127 (QGAFQRQNAFVKRA).

It belongs to the RxLR effector family. As to quaternary structure, interacts with host histone acetyl transferase SAGA complex subunit ADA2.

Its subcellular location is the secreted. It is found in the host nucleus. The protein localises to the host cytoplasm. Its function is as follows. Effector that suppresses plant defense responses during the early stages of pathogen infection. Suppresses cell death induced by effectors and PAMPs in plant hosts. Acts as a modulator of histone acetyltransferase (HAT) in plants. Avh23 binds to the ADA2 subunit of the HAT complex SAGA and disrupts its assembly by interfering with the association of ADA2 with the catalytic subunit GCN5. As such, Avh23 suppresses H3K9 acetylation mediated by the ADA2/GCN5 module and increases plant susceptibility. The chain is RxLR effector protein Avh23 from Phytophthora sojae (Soybean stem and root rot agent).